Here is a 417-residue protein sequence, read N- to C-terminus: Calreticulin (417 aa).

A signal peptide spans M1–A17. Positions E18 to E197 are N-domain. Q26 contacts Ca(2+). K48 is subject to N6-acetyllysine. Residues K62 and K64 each coordinate Ca(2+). K64 is subject to N6-(2-hydroxyisobutyryl)lysine. C105 and C137 are oxidised to a cystine. An alpha-D-glucoside is bound by residues Y109, K111, Y128, and D135. K159 is subject to N6-acetyllysine. One copy of the 1-1 repeat lies at V191–F202. The 4 X approximate repeats stretch occupies residues V191–E255. A disordered region spans residues S193–P277. Residues D198–Y308 form a P-domain region. Positions K207 to E251 are enriched in basic and acidic residues. The residue at position 209 (K209) is an N6-acetyllysine. Tandem repeats lie at residues D210–E221, D227–K238, D244–E255, G259–P269, G273–P283, and G287–P297. An interaction with PPIB region spans residues D237 to E270. A compositionally biased stretch (acidic residues) spans D252–W261. Residues G259 to P297 are 3 X approximate repeats. The interval D309 to L417 is C-domain. An an alpha-D-glucoside-binding site is contributed by D317. A Ca(2+)-binding site is contributed by D328. The tract at residues T350–L417 is disordered. Residues A352–E379 show a composition bias toward basic and acidic residues. Positions E380–T408 are enriched in acidic residues. The Prevents secretion from ER signature appears at K414–L417.

It belongs to the calreticulin family. In terms of assembly, monomer. Component of an EIF2 complex at least composed of CELF1/CUGBP1, CALR, CALR3, EIF2S1, EIF2S2, HSP90B1 and HSPA5. Interacts with PDIA3/ERp57 and SPACA9. Interacts with TRIM21. Interacts with NR3C1. Interacts with PPIB. Interacts (via P-domain) with PDIA5. Interacts with GABARAP. Interacts with CLCC1.

The protein resides in the endoplasmic reticulum lumen. It localises to the cytoplasm. The protein localises to the cytosol. It is found in the cytolytic granule. Its subcellular location is the secreted. The protein resides in the extracellular space. It localises to the extracellular matrix. The protein localises to the cell surface. It is found in the sarcoplasmic reticulum lumen. Its subcellular location is the cytoplasmic vesicle. The protein resides in the secretory vesicle. It localises to the cortical granule. Its function is as follows. Calcium-binding chaperone that promotes folding, oligomeric assembly and quality control in the endoplasmic reticulum (ER) via the calreticulin/calnexin cycle. This lectin interacts transiently with almost all of the monoglucosylated glycoproteins that are synthesized in the ER. Interacts with the DNA-binding domain of NR3C1 and mediates its nuclear export. Involved in maternal gene expression regulation. May participate in oocyte maturation via the regulation of calcium homeostasis. Present in the cortical granules of non-activated oocytes, is exocytosed during the cortical reaction in response to oocyte activation and might participate in the block to polyspermy. This is Calreticulin (CALR) from Cricetulus griseus (Chinese hamster).